The primary structure comprises 157 residues: 2-C-methyl-D-erythritol 2,4-cyclodiphosphate synthase (157 aa).

Aspartate 8 and histidine 10 together coordinate a divalent metal cation. 4-CDP-2-C-methyl-D-erythritol 2-phosphate is bound by residues 8–10 and 34–35; these read DVH and HS. Histidine 42 lines the a divalent metal cation pocket. 4-CDP-2-C-methyl-D-erythritol 2-phosphate contacts are provided by residues 56-58, 61-65, 100-106, 132-135, phenylalanine 139, and arginine 142; these read DIG, FPDTD, AQRPKMA, and TTTE.

It belongs to the IspF family. In terms of assembly, homotrimer. It depends on a divalent metal cation as a cofactor.

The enzyme catalyses 4-CDP-2-C-methyl-D-erythritol 2-phosphate = 2-C-methyl-D-erythritol 2,4-cyclic diphosphate + CMP. It functions in the pathway isoprenoid biosynthesis; isopentenyl diphosphate biosynthesis via DXP pathway; isopentenyl diphosphate from 1-deoxy-D-xylulose 5-phosphate: step 4/6. Involved in the biosynthesis of isopentenyl diphosphate (IPP) and dimethylallyl diphosphate (DMAPP), two major building blocks of isoprenoid compounds. Catalyzes the conversion of 4-diphosphocytidyl-2-C-methyl-D-erythritol 2-phosphate (CDP-ME2P) to 2-C-methyl-D-erythritol 2,4-cyclodiphosphate (ME-CPP) with a corresponding release of cytidine 5-monophosphate (CMP). This Geobacter sulfurreducens (strain ATCC 51573 / DSM 12127 / PCA) protein is 2-C-methyl-D-erythritol 2,4-cyclodiphosphate synthase.